We begin with the raw amino-acid sequence, 322 residues long: Pantothenate kinase (322 aa).

Position 100–107 (100–107 (GSVAVGKS)) interacts with ATP.

The protein belongs to the prokaryotic pantothenate kinase family.

The protein resides in the cytoplasm. The enzyme catalyses (R)-pantothenate + ATP = (R)-4'-phosphopantothenate + ADP + H(+). It participates in cofactor biosynthesis; coenzyme A biosynthesis; CoA from (R)-pantothenate: step 1/5. This Brucella abortus (strain 2308) protein is Pantothenate kinase.